We begin with the raw amino-acid sequence, 362 residues long: Chorismate synthase (362 aa).

Arg-47 provides a ligand contact to NADP(+). Residues 124–126 (RAS), Gly-286, 301–305 (KPTAT), and Arg-327 each bind FMN.

The protein belongs to the chorismate synthase family. In terms of assembly, homotetramer. The cofactor is FMNH2.

The catalysed reaction is 5-O-(1-carboxyvinyl)-3-phosphoshikimate = chorismate + phosphate. The protein operates within metabolic intermediate biosynthesis; chorismate biosynthesis; chorismate from D-erythrose 4-phosphate and phosphoenolpyruvate: step 7/7. Its function is as follows. Catalyzes the anti-1,4-elimination of the C-3 phosphate and the C-6 proR hydrogen from 5-enolpyruvylshikimate-3-phosphate (EPSP) to yield chorismate, which is the branch point compound that serves as the starting substrate for the three terminal pathways of aromatic amino acid biosynthesis. This reaction introduces a second double bond into the aromatic ring system. The chain is Chorismate synthase from Synechococcus sp. (strain WH7803).